A 274-amino-acid polypeptide reads, in one-letter code: Carbonic anhydrase (274 aa).

Zn(2+) is bound by residues cysteine 39, histidine 98, and cysteine 101. The interval 214–274 (EDEYAPHPNS…QAERIYRGSR (61 aa)) is disordered. Basic and acidic residues-rich tracts occupy residues 234-245 (PGKERPGREKAT) and 261-274 (LPRE…RGSR).

Belongs to the beta-class carbonic anhydrase family. In terms of assembly, a hexamer formed by a trimer of dimers. Interacts with the first 260 residues of CcmM; both the N-terminal 206 residues and the C-terminal tail contribute to CcmM binding. Interacts with full-length and the N-terminal 249 residues of CcmM. A probable CcmM-CcaA-CcmN complex as well as a CcaA-RuBisCO-CcmM complex can also be isolated. Zn(2+) is required as a cofactor.

The protein resides in the carboxysome. The enzyme catalyses hydrogencarbonate + H(+) = CO2 + H2O. Inhibited by ethoxyzolamide. Its function is as follows. Reversible hydration of carbon dioxide. Essential to photosynthetic carbon dioxide fixation, supplies CO(2) to RuBisCO (ribulose bisphosphate carboxylase, rbcL-rbcS) in the carboxysome. This chain is Carbonic anhydrase, found in Synechocystis sp. (strain ATCC 27184 / PCC 6803 / Kazusa).